We begin with the raw amino-acid sequence, 312 residues long: Protein-methionine-sulfoxide reductase catalytic subunit MsrP (312 aa).

Positions 1–47 form a signal peptide, tat-type signal; sequence MLIRRPPDLLPSEITPEPLARGRRALLKGLGAGAALAGLGLPQISQA. Mo-molybdopterin is bound by residues N74, 77–78, C133, T168, N216, R221, and 232–234; these read YE and SAK.

Belongs to the MsrP family. In terms of assembly, heterodimer of a catalytic subunit (MsrP) and a heme-binding subunit (MsrQ). Mo-molybdopterin is required as a cofactor. Post-translationally, predicted to be exported by the Tat system. The position of the signal peptide cleavage has not been experimentally proven.

It is found in the periplasm. It catalyses the reaction L-methionyl-[protein] + a quinone + H2O = L-methionyl-(R)-S-oxide-[protein] + a quinol. Functionally, part of the MsrPQ system that repairs oxidized periplasmic proteins containing methionine sulfoxide residues (Met-O), using respiratory chain electrons. Thus protects these proteins from oxidative-stress damage caused by reactive species of oxygen and chlorine generated by the host defense mechanisms. MsrPQ is essential for the maintenance of envelope integrity under bleach stress, rescuing a wide series of structurally unrelated periplasmic proteins from methionine oxidation. The catalytic subunit MsrP is non-stereospecific, being able to reduce both (R-) and (S-) diastereoisomers of methionine sulfoxide. Involved in protection against reactive chlorine species (RCS) generated by chlorite and hypochlorite. This Azospira oryzae (strain ATCC BAA-33 / DSM 13638 / PS) (Dechlorosoma suillum) protein is Protein-methionine-sulfoxide reductase catalytic subunit MsrP.